We begin with the raw amino-acid sequence, 276 residues long: Bis(5'-nucleosyl)-tetraphosphatase, symmetrical (276 aa).

Belongs to the Ap4A hydrolase family.

The enzyme catalyses P(1),P(4)-bis(5'-adenosyl) tetraphosphate + H2O = 2 ADP + 2 H(+). Hydrolyzes diadenosine 5',5'''-P1,P4-tetraphosphate to yield ADP. The polypeptide is Bis(5'-nucleosyl)-tetraphosphatase, symmetrical (Mannheimia succiniciproducens (strain KCTC 0769BP / MBEL55E)).